The primary structure comprises 697 residues: Alpha-1,4-glucan:maltose-1-phosphate maltosyltransferase (697 aa).

Position 284 (lysine 284) interacts with alpha-maltose 1-phosphate. The segment at arginine 286–serine 305 is disordered. Alpha-maltose 1-phosphate-binding residues include glutamine 344 and aspartate 379. The active-site Nucleophile is aspartate 414. Position 415 (asparagine 415) interacts with alpha-maltose 1-phosphate. Residue glutamate 443 is the Proton donor of the active site. Lysine 553 to tyrosine 554 lines the alpha-maltose 1-phosphate pocket.

Belongs to the glycosyl hydrolase 13 family. GlgE subfamily. In terms of assembly, homodimer.

It catalyses the reaction alpha-maltose 1-phosphate + [(1-&gt;4)-alpha-D-glucosyl](n) = [(1-&gt;4)-alpha-D-glucosyl](n+2) + phosphate. The protein operates within glycan biosynthesis; glycogen biosynthesis. Its activity is regulated as follows. The transfer reaction from maltose-1-P to glycogen is inhibited by micromolar amounts of inorganic phosphate or arsenate but is only slightly inhibited by millimolar concentrations of glucose-1-P, glucose-6-P, or inorganic pyrophosphate. Is also inhibited by ATP, by 1,4-dideoxy-1,4-imino-D-arabinitol (DIA), but not by isofagomine. Its function is as follows. Maltosyltransferase that uses maltose 1-phosphate (M1P) as the sugar donor to elongate linear or branched alpha-(1-&gt;4)-glucans. Is also able to catalyze the reverse reaction in vitro. Cannot use glucose 1-phosphate as substrate. Is involved in a branched alpha-glucan biosynthetic pathway from trehalose, together with TreS, Mak and GlgB. This chain is Alpha-1,4-glucan:maltose-1-phosphate maltosyltransferase (glgE), found in Mycolicibacterium smegmatis (strain ATCC 700084 / mc(2)155) (Mycobacterium smegmatis).